A 183-amino-acid chain; its full sequence is uncharacterized protein (183 aa).

It belongs to the asfivirus S183L family.

This is an uncharacterized protein from Ornithodoros (relapsing fever ticks).